The chain runs to 427 residues: UPF0229 protein YeaH (427 aa).

The tract at residues 87 to 110 (RIERSQGGGGGSGSGQGQASQDGE) is disordered. Over residues 92-102 (QGGGGGSGSGQ) the composition is skewed to gly residues.

This sequence belongs to the UPF0229 family.

The polypeptide is UPF0229 protein YeaH (Escherichia coli O6:K15:H31 (strain 536 / UPEC)).